Here is a 476-residue protein sequence, read N- to C-terminus: Aspartyl/glutamyl-tRNA(Asn/Gln) amidotransferase subunit B (476 aa).

This sequence belongs to the GatB/GatE family. GatB subfamily. In terms of assembly, heterotrimer of A, B and C subunits.

The catalysed reaction is L-glutamyl-tRNA(Gln) + L-glutamine + ATP + H2O = L-glutaminyl-tRNA(Gln) + L-glutamate + ADP + phosphate + H(+). It carries out the reaction L-aspartyl-tRNA(Asn) + L-glutamine + ATP + H2O = L-asparaginyl-tRNA(Asn) + L-glutamate + ADP + phosphate + 2 H(+). Its function is as follows. Allows the formation of correctly charged Asn-tRNA(Asn) or Gln-tRNA(Gln) through the transamidation of misacylated Asp-tRNA(Asn) or Glu-tRNA(Gln) in organisms which lack either or both of asparaginyl-tRNA or glutaminyl-tRNA synthetases. The reaction takes place in the presence of glutamine and ATP through an activated phospho-Asp-tRNA(Asn) or phospho-Glu-tRNA(Gln). The polypeptide is Aspartyl/glutamyl-tRNA(Asn/Gln) amidotransferase subunit B (Neisseria meningitidis serogroup C (strain 053442)).